The following is a 175-amino-acid chain: Flagellar assembly factor FliW (175 aa).

The protein belongs to the FliW family. In terms of assembly, interacts with translational regulator CsrA and flagellin(s).

It localises to the cytoplasm. Its function is as follows. Acts as an anti-CsrA protein, binds CsrA and prevents it from repressing translation of its target genes, one of which is flagellin. Binds to flagellin and participates in the assembly of the flagellum. The polypeptide is Flagellar assembly factor FliW (Bdellovibrio bacteriovorus (strain ATCC 15356 / DSM 50701 / NCIMB 9529 / HD100)).